The following is a 296-amino-acid chain: tRNA dimethylallyltransferase (296 aa).

Position 9 to 16 (9 to 16 (GPTAVGKT)) interacts with ATP. Position 11-16 (11-16 (TAVGKT)) interacts with substrate. Positions 34–37 (DSRQ) are interaction with substrate tRNA.

The protein belongs to the IPP transferase family. Monomer. It depends on Mg(2+) as a cofactor.

It carries out the reaction adenosine(37) in tRNA + dimethylallyl diphosphate = N(6)-dimethylallyladenosine(37) in tRNA + diphosphate. Its function is as follows. Catalyzes the transfer of a dimethylallyl group onto the adenine at position 37 in tRNAs that read codons beginning with uridine, leading to the formation of N6-(dimethylallyl)adenosine (i(6)A). The protein is tRNA dimethylallyltransferase of Chloroflexus aurantiacus (strain ATCC 29366 / DSM 635 / J-10-fl).